The following is a 509-amino-acid chain: 2,3-bisphosphoglycerate-independent phosphoglycerate mutase (509 aa).

Asp12 and Ser62 together coordinate Mn(2+). The Phosphoserine intermediate role is filled by Ser62. Residues His123, 153-154 (RD), Arg185, Arg191, 260-263 (RPDR), and Lys333 contribute to the substrate site. Residues Asp400, His404, Asp441, His442, and His460 each contribute to the Mn(2+) site.

This sequence belongs to the BPG-independent phosphoglycerate mutase family. In terms of assembly, monomer. It depends on Mn(2+) as a cofactor.

The catalysed reaction is (2R)-2-phosphoglycerate = (2R)-3-phosphoglycerate. It participates in carbohydrate degradation; glycolysis; pyruvate from D-glyceraldehyde 3-phosphate: step 3/5. Its function is as follows. Catalyzes the interconversion of 2-phosphoglycerate and 3-phosphoglycerate. This chain is 2,3-bisphosphoglycerate-independent phosphoglycerate mutase, found in Clostridium botulinum (strain Langeland / NCTC 10281 / Type F).